Here is a 549-residue protein sequence, read N- to C-terminus: uncharacterized protein (549 aa).

Transmembrane regions (helical) follow at residues 1-21 (MEIF…GVVT), 28-48 (IPLP…TFGL), 50-70 (VEFD…FADG), 85-105 (IFGL…FLIY), 106-126 (WVVP…LSPT), 165-185 (FAVA…TVEF), 187-207 (KVAI…GRSL), 222-242 (IVLL…IGVS), 278-298 (LEFV…PGIL), 310-330 (NVEI…LMLV), 361-381 (ILIA…VLSI), and 398-418 (VFLA…MLPI).

This sequence belongs to the monovalent cation:proton antiporter 1 (CPA1) transporter (TC 2.A.36) family.

The protein localises to the cell inner membrane. This is an uncharacterized protein from Escherichia coli (strain K12).